Here is a 174-residue protein sequence, read N- to C-terminus: MKKVVKYLISLILAIIIVLFVQTFVIVGHVIPNNDMSPTLNKGDRVIVNKIKVTFNQLNNGDIITYRRGNEIYTSRIIAKPGQSMAFRQGQLYRDDRPVDASYAKNRKIKDFSLRNFKKLDGDIIPPNNFVVLNDHDNNQHDSRQFGLIDKKDIIGNISLRYYPFSKWTIQFKS.

At 1-7 (MKKVVKY) the chain is on the cytoplasmic side. The chain crosses the membrane as a helical span at residues 8 to 28 (LISLILAIIIVLFVQTFVIVG). Residues 29–174 (HVIPNNDMSP…FSKWTIQFKS (146 aa)) lie on the Extracellular side of the membrane.

It belongs to the peptidase S26 family.

The protein resides in the cell membrane. Its function is as follows. Catalytically inactive. In Staphylococcus aureus (strain MRSA252), this protein is Inactive signal peptidase IA (spsA).